The primary structure comprises 121 residues: Large ribosomal subunit protein uL18 (121 aa).

This sequence belongs to the universal ribosomal protein uL18 family. Part of the 50S ribosomal subunit; part of the 5S rRNA/L5/L18/L25 subcomplex. Contacts the 5S and 23S rRNAs.

Its function is as follows. This is one of the proteins that bind and probably mediate the attachment of the 5S RNA into the large ribosomal subunit, where it forms part of the central protuberance. The protein is Large ribosomal subunit protein uL18 of Burkholderia mallei (strain NCTC 10247).